The following is a 184-amino-acid chain: Large ribosomal subunit protein uL6 (184 aa).

The protein belongs to the universal ribosomal protein uL6 family. As to quaternary structure, part of the 50S ribosomal subunit.

This protein binds to the 23S rRNA, and is important in its secondary structure. It is located near the subunit interface in the base of the L7/L12 stalk, and near the tRNA binding site of the peptidyltransferase center. The chain is Large ribosomal subunit protein uL6 from Onion yellows phytoplasma (strain OY-M).